Here is a 313-residue protein sequence, read N- to C-terminus: Ribosomal RNA small subunit methyltransferase H (313 aa).

S-adenosyl-L-methionine is bound by residues 35-37, Asp-55, Phe-79, Asp-101, and Gln-108; that span reads GGH.

It belongs to the methyltransferase superfamily. RsmH family.

It is found in the cytoplasm. It catalyses the reaction cytidine(1402) in 16S rRNA + S-adenosyl-L-methionine = N(4)-methylcytidine(1402) in 16S rRNA + S-adenosyl-L-homocysteine + H(+). Its function is as follows. Specifically methylates the N4 position of cytidine in position 1402 (C1402) of 16S rRNA. The sequence is that of Ribosomal RNA small subunit methyltransferase H from Erwinia tasmaniensis (strain DSM 17950 / CFBP 7177 / CIP 109463 / NCPPB 4357 / Et1/99).